Consider the following 149-residue polypeptide: Probable flagellum biosynthesis repressor protein FlbT (149 aa).

The protein belongs to the FlbT family.

In terms of biological role, has a post-transcriptional repressor function in flagellum biogenesis. Associates with the 5'-UTR of fljK mRNA and promotes its degradation. In Rhizobium etli (strain CIAT 652), this protein is Probable flagellum biosynthesis repressor protein FlbT.